The sequence spans 88 residues: Large ribosomal subunit protein bL27 (88 aa).

The tract at residues 1–21 is disordered; it reads MAHKKGVGSSRNGRDSQPKML.

The protein belongs to the bacterial ribosomal protein bL27 family.

This Pelotomaculum thermopropionicum (strain DSM 13744 / JCM 10971 / SI) protein is Large ribosomal subunit protein bL27.